Consider the following 37-residue polypeptide: Cytochrome b6-f complex subunit 7 (37 aa).

The helical transmembrane segment at Ile-5–Phe-25 threads the bilayer.

This sequence belongs to the PetM family. The 4 large subunits of the cytochrome b6-f complex are cytochrome b6, subunit IV (17 kDa polypeptide, PetD), cytochrome f and the Rieske protein, while the 4 small subunits are PetG, PetL, PetM and PetN. The complex functions as a dimer.

It is found in the cellular thylakoid membrane. Its function is as follows. Component of the cytochrome b6-f complex, which mediates electron transfer between photosystem II (PSII) and photosystem I (PSI), cyclic electron flow around PSI, and state transitions. This is Cytochrome b6-f complex subunit 7 from Synechococcus elongatus (strain ATCC 33912 / PCC 7942 / FACHB-805) (Anacystis nidulans R2).